Consider the following 357-residue polypeptide: MMCMKALEALVSPQTLFYTSNEPFITEFGATLPELQVAYRMWGRLNADKSNVIVICHALTGSADADDWWEGMFGTGKAFDPSEYCIICSNVLGSCYGTTGPTSPNPATGNRYGADFPLITIRDMVRVQHRLLTALGIERIKLVVGASLGGMQVLEWGFLYPEMAQALMAMGASGRHSAWCIGQSEAQRQAIYADRHWNGGSYAPEQPPNHGLAAARMMAMCSYRSFENYQERFGRTMQQGRQGALFSIESYLHHQGRKLVERFDANTYVTLTKAMDMHDVARGRGEYEEVLRSMTLPIEVLSINSDILYPMEEQEELAELMPNASILYLDEPYGHDAFLIEVEKVNQMVNDFLNKLE.

The 290-residue stretch at 51-340 folds into the AB hydrolase-1 domain; sequence NVIVICHALT…EPYGHDAFLI (290 aa). The Nucleophile role is filled by S147. R216 is a binding site for substrate. Active-site residues include D306 and H335. D336 contributes to the substrate binding site.

This sequence belongs to the AB hydrolase superfamily. MetX family. In terms of assembly, homodimer.

Its subcellular location is the cytoplasm. The enzyme catalyses L-homoserine + acetyl-CoA = O-acetyl-L-homoserine + CoA. It functions in the pathway amino-acid biosynthesis; L-methionine biosynthesis via de novo pathway; O-acetyl-L-homoserine from L-homoserine: step 1/1. Functionally, transfers an acetyl group from acetyl-CoA to L-homoserine, forming acetyl-L-homoserine. This Chlorobium chlorochromatii (strain CaD3) protein is Homoserine O-acetyltransferase.